A 163-amino-acid polypeptide reads, in one-letter code: MAASLIRQTKLLSVFSSAGCFRSIHSTAACLKNRAARIRVGKGDRPLTYEQAHHPHHISHRKGWLSQHTGNLHAEGGAAERVLEDVFIRRFIFGTFHSCLADELVIKRRGNVLIICAVMIQKLLPSKFYFLLGYTEELLSHFYKCPVKMELQLVDEKVVYKYL.

The N-terminal 31 residues, 1–31 (MAASLIRQTKLLSVFSSAGCFRSIHSTAACL), are a transit peptide targeting the mitochondrion.

This sequence belongs to the universal ribosomal protein uS3 family. As to quaternary structure, component of the mitochondrial ribosome small subunit (28S) which comprises a 12S rRNA and about 30 distinct proteins.

It localises to the mitochondrion. The chain is Small ribosomal subunit protein uS3m (mrps24) from Danio rerio (Zebrafish).